Consider the following 738-residue polypeptide: Transcription activator of gluconeogenesis SMAC_06113 (738 aa).

The interval 1–65 (MPDDVGPAEA…KYDPKDPLRP (65 aa)) is disordered. 2 stretches are compositionally biased toward basic and acidic residues: residues 28–39 (ATTKDDDEKMAE) and 51–64 (GDQKKKYDPKDPLR). A DNA-binding region (zn(2)-C6 fungal-type) is located at residues 74–102 (CYACQRAHLTCGDERPCQRCIKRGLAEAC). Disordered stretches follow at residues 255–278 (SSGAAETPPRDPSISQQGTAGDVG), 328–404 (HAYA…KRQR), 530–579 (GTNS…KEQP), and 636–673 (SVPTTAGGSGSSNGTVVNGGPDSSPAGKTERERSTGAN). Composition is skewed to polar residues over residues 337-351 (TSLQSPSTENNSPQP) and 530-540 (GTNSDTLSVSS). One can recognise a PAS domain in the interval 475 to 546 (ALFEHEEFMH…SVSSKGGRGG (72 aa)). 2 stretches are compositionally biased toward low complexity: residues 568–579 (QQQQSQQQKEQP) and 636–655 (SVPTTAGGSGSSNGTVVNGG).

Belongs to the ERT1/acuK family.

The protein resides in the nucleus. Transcription factor which regulates nonfermentable carbon utilization. Activator of gluconeogenetic genes. The polypeptide is Transcription activator of gluconeogenesis SMAC_06113 (Sordaria macrospora (strain ATCC MYA-333 / DSM 997 / K(L3346) / K-hell)).